The following is a 73-amino-acid chain: Structural DNA-binding protein p10 (73 aa).

The disordered stretch occupies residues 1-35; the sequence is MPTKAGTKSTAHKKTTTKGPSKSPKGKTHATALHQ.

It belongs to the asfivirus P10 family.

The protein resides in the virion. In terms of biological role, may play a role in genome packaging through direct interaction with viral DNA. Binds to ssDNA and dsDNA with the same apparent affinity in vitro. This African swine fever virus (isolate Tick/Malawi/Lil 20-1/1983) (ASFV) protein is Structural DNA-binding protein p10.